The chain runs to 560 residues: Dimethylaniline monooxygenase [N-oxide-forming] 4 (560 aa).

FAD contacts are provided by residues Gly9 to Ser13, Glu32, and Leu40 to Trp41. NADP(+) contacts are provided by residues Thr60–Asn61 and Thr195–Asp198. A helical membrane pass occupies residues Ala519 to Val539.

It belongs to the FMO family. Requires FAD as cofactor. As to expression, detected in liver and kidney (at protein level).

The protein localises to the microsome membrane. Its subcellular location is the endoplasmic reticulum membrane. The catalysed reaction is N,N-dimethylaniline + NADPH + O2 + H(+) = N,N-dimethylaniline N-oxide + NADP(+) + H2O. Its function is as follows. This protein is involved in the oxidative metabolism of a variety of xenobiotics such as drugs and pesticides. This chain is Dimethylaniline monooxygenase [N-oxide-forming] 4 (Fmo4), found in Rattus norvegicus (Rat).